The sequence spans 760 residues: ATP-dependent DNA helicase Hel308 (760 aa).

ATP-binding positions include glutamine 28 and isoleucine 46 to threonine 53. Residues glutamate 33–glutamate 199 form the Helicase ATP-binding domain. The short motif at aspartate 144–histidine 147 is the DEAH box element. The region spanning alanine 232 to arginine 426 is the Helicase C-terminal domain.

This sequence belongs to the helicase family. Hel308 subfamily. As to quaternary structure, monomer.

It catalyses the reaction Couples ATP hydrolysis with the unwinding of duplex DNA by translocating in the 3'-5' direction.. The enzyme catalyses ATP + H2O = ADP + phosphate + H(+). DNA-dependent ATPase and 3'-5' DNA helicase that may be involved in repair of stalled replication forks. In Methanococcoides burtonii (strain DSM 6242 / NBRC 107633 / OCM 468 / ACE-M), this protein is ATP-dependent DNA helicase Hel308.